The primary structure comprises 299 residues: CRISPR system Cms protein Csm4 (299 aa).

The protein belongs to the CRISPR-associated Csm4 family. In terms of assembly, part of the Csm effector complex that includes at least Cas10(1), Csm2(3), Csm3(5), Csm4(1), Csm5(1) and mature crRNA. The Csm complex is elongated and slightly twisted with a maximal length of 215 Angstroms and a diameter of 75-80 Angstroms. It has been modeled to have a central protein filamant of Csm3 subunits along which the dsRNA helix of paired crRNA and target RNA binds. The filament is capped at one end by Cas10 and Csm4 and at the other end by Csm5; ssDNA is thought to bind to the N-terminal HD domain of Cas10. Csm with a precursor crRNA does not include Csm5, while Cas6, the enzyme probably involved in pre-crRNA processing, is found associated with a subset of the Csm complex.

Functionally, CRISPR (clustered regularly interspaced short palindromic repeat) is an adaptive immune system that provides protection against mobile genetic elements (viruses, transposable elements and conjugative plasmids). CRISPR clusters contain spacers, sequences complementary to antecedent mobile elements, and target invading nucleic acids. CRISPR clusters are transcribed and processed into CRISPR RNA (crRNA). The type III-A Csm effector complex binds crRNA and acts as a crRNA-guided RNase, DNase and cyclic oligoadenylate synthase; binding of target RNA cognate to the crRNA is required for all activities. In a heterologous host this Csm effector complex restricts ssRNA phage MS2, suggesting it may target RNA viruses in vivo. Csm functions as a non-specific ssDNase. Base-pairing between crRNA and target RNA to form a ternary Csm complex activates a ssDNase activity; target RNA cleavage suppresses the ssDNase, a temporal control that prevents uncontrolled DNA degradation. Viral RNA transcripts probably tether the Csm complex to the viral genome, recruiting Cas10 ssDNA activity which is able to degrade DNA in the transcription bubble, spatially controlling the DNase activity. In terms of biological role, the subunit probably binds to the 5' handle of the crRNA, helping in discrimination between self- and non-self. This Streptococcus thermophilus protein is CRISPR system Cms protein Csm4.